The chain runs to 209 residues: Flavin prenyltransferase UbiX (209 aa).

FMN contacts are provided by residues 13–15 (GAS), Ser39, 104–107 (STGT), Cys116, and Arg139. Residues Tyr169 and Arg185 each coordinate dimethylallyl phosphate.

It belongs to the UbiX/PAD1 family.

It catalyses the reaction dimethylallyl phosphate + FMNH2 = prenylated FMNH2 + phosphate. In terms of biological role, flavin prenyltransferase that catalyzes the synthesis of the prenylated FMN cofactor (prenyl-FMN) for 4-hydroxy-3-polyprenylbenzoic acid decarboxylase UbiD. The prenyltransferase is metal-independent and links a dimethylallyl moiety from dimethylallyl monophosphate (DMAP) to the flavin N5 and C6 atoms of FMN. This chain is Flavin prenyltransferase UbiX, found in Pseudomonas aeruginosa (strain ATCC 15692 / DSM 22644 / CIP 104116 / JCM 14847 / LMG 12228 / 1C / PRS 101 / PAO1).